The sequence spans 241 residues: Uracil-DNA glycosylase (241 aa).

Asp-71 functions as the Proton acceptor in the catalytic mechanism.

This sequence belongs to the uracil-DNA glycosylase (UDG) superfamily. UNG family.

It is found in the cytoplasm. It carries out the reaction Hydrolyzes single-stranded DNA or mismatched double-stranded DNA and polynucleotides, releasing free uracil.. Its function is as follows. Excises uracil residues from the DNA which can arise as a result of misincorporation of dUMP residues by DNA polymerase or due to deamination of cytosine. The protein is Uracil-DNA glycosylase of Xanthomonas campestris pv. campestris (strain 8004).